Consider the following 315-residue polypeptide: Transaldolase (315 aa).

Residue Lys125 is the Schiff-base intermediate with substrate of the active site.

This sequence belongs to the transaldolase family. Type 1 subfamily. In terms of assembly, homodimer.

The protein resides in the cytoplasm. The enzyme catalyses D-sedoheptulose 7-phosphate + D-glyceraldehyde 3-phosphate = D-erythrose 4-phosphate + beta-D-fructose 6-phosphate. It participates in carbohydrate degradation; pentose phosphate pathway; D-glyceraldehyde 3-phosphate and beta-D-fructose 6-phosphate from D-ribose 5-phosphate and D-xylulose 5-phosphate (non-oxidative stage): step 2/3. Transaldolase is important for the balance of metabolites in the pentose-phosphate pathway. This Paracidovorax citrulli (strain AAC00-1) (Acidovorax citrulli) protein is Transaldolase.